The primary structure comprises 94 residues: Acylphosphatase (94 aa).

The 87-residue stretch at 8–94 (HIRAWVSGKV…ETPPLGFEVC (87 aa)) folds into the Acylphosphatase-like domain. Catalysis depends on residues R23 and N41.

The protein belongs to the acylphosphatase family.

It carries out the reaction an acyl phosphate + H2O = a carboxylate + phosphate + H(+). The polypeptide is Acylphosphatase (acyP) (Hahella chejuensis (strain KCTC 2396)).